Here is a 319-residue protein sequence, read N- to C-terminus: Cytochrome c biogenesis protein CcsA (319 aa).

8 helical membrane passes run 9-29, 48-68, 71-91, 98-118, 143-163, 225-245, 258-275, and 286-306; these read ILTH…LISL, TFFC…HFPL, LYES…VPYF, LSTI…SGLL, MILG…LLVI, IISL…VWAN, ETWA…LHTR, and AIVA…VNLL.

It belongs to the CcmF/CycK/Ccl1/NrfE/CcsA family. As to quaternary structure, may interact with Ccs1.

Its subcellular location is the plastid. It localises to the chloroplast thylakoid membrane. Functionally, required during biogenesis of c-type cytochromes (cytochrome c6 and cytochrome f) at the step of heme attachment. This chain is Cytochrome c biogenesis protein CcsA, found in Eucalyptus globulus subsp. globulus (Tasmanian blue gum).